A 230-amino-acid polypeptide reads, in one-letter code: Fibrillarin-like rRNA/tRNA 2'-O-methyltransferase (230 aa).

S-adenosyl-L-methionine contacts are provided by residues 89 to 90 (TT), 107 to 108 (EV), 132 to 133 (DA), and 152 to 155 (DISQ).

This sequence belongs to the methyltransferase superfamily. Fibrillarin family. In terms of assembly, interacts with nop5. Component of box C/D small ribonucleoprotein (sRNP) particles that contain rpl7ae, FlpA and nop5, plus a guide RNA.

Functionally, involved in pre-rRNA and tRNA processing. Utilizes the methyl donor S-adenosyl-L-methionine to catalyze the site-specific 2'-hydroxyl methylation of ribose moieties in rRNA and tRNA. Site specificity is provided by a guide RNA that base pairs with the substrate. Methylation occurs at a characteristic distance from the sequence involved in base pairing with the guide RNA. In Thermoplasma acidophilum (strain ATCC 25905 / DSM 1728 / JCM 9062 / NBRC 15155 / AMRC-C165), this protein is Fibrillarin-like rRNA/tRNA 2'-O-methyltransferase.